The primary structure comprises 176 residues: Protein GrpE (176 aa).

The protein belongs to the GrpE family. Homodimer.

It is found in the cytoplasm. Functionally, participates actively in the response to hyperosmotic and heat shock by preventing the aggregation of stress-denatured proteins, in association with DnaK and GrpE. It is the nucleotide exchange factor for DnaK and may function as a thermosensor. Unfolded proteins bind initially to DnaJ; upon interaction with the DnaJ-bound protein, DnaK hydrolyzes its bound ATP, resulting in the formation of a stable complex. GrpE releases ADP from DnaK; ATP binding to DnaK triggers the release of the substrate protein, thus completing the reaction cycle. Several rounds of ATP-dependent interactions between DnaJ, DnaK and GrpE are required for fully efficient folding. This is Protein GrpE from Thermoplasma volcanium (strain ATCC 51530 / DSM 4299 / JCM 9571 / NBRC 15438 / GSS1).